The primary structure comprises 84 residues: MKLTIFALVACFFILQIAAFPLEEAATAEEIEQGEHIRVKRVTCDILSVEAKGVKLNDAACAAHCLFRGRSGGYCNGKRVCVCR.

The first 19 residues, 1–19 (MKLTIFALVACFFILQIAA), serve as a signal peptide directing secretion. The propeptide occupies 20–41 (FPLEEAATAEEIEQGEHIRVKR). Disulfide bonds link Cys44–Cys75, Cys61–Cys81, and Cys65–Cys83.

The protein belongs to the invertebrate defensin family. Type 1 subfamily.

The protein localises to the secreted. Functionally, bactericidal protein produced in response to injury. It is cytotoxic to Gram-positive bacteria. The polypeptide is Tenecin-1 (Tenebrio molitor (Yellow mealworm beetle)).